The following is a 323-amino-acid chain: Aspartate carbamoyltransferase catalytic subunit (323 aa).

Residues Arg-71 and Thr-72 each coordinate carbamoyl phosphate. Position 99 (Lys-99) interacts with L-aspartate. Carbamoyl phosphate contacts are provided by Arg-121, His-151, and Gln-154. L-aspartate contacts are provided by Arg-184 and Arg-239. Carbamoyl phosphate-binding residues include Gly-280 and Pro-281.

It belongs to the aspartate/ornithine carbamoyltransferase superfamily. ATCase family. Heterododecamer (2C3:3R2) of six catalytic PyrB chains organized as two trimers (C3), and six regulatory PyrI chains organized as three dimers (R2).

It carries out the reaction carbamoyl phosphate + L-aspartate = N-carbamoyl-L-aspartate + phosphate + H(+). It functions in the pathway pyrimidine metabolism; UMP biosynthesis via de novo pathway; (S)-dihydroorotate from bicarbonate: step 2/3. Catalyzes the condensation of carbamoyl phosphate and aspartate to form carbamoyl aspartate and inorganic phosphate, the committed step in the de novo pyrimidine nucleotide biosynthesis pathway. The sequence is that of Aspartate carbamoyltransferase catalytic subunit from Ralstonia pickettii (strain 12J).